Consider the following 310-residue polypeptide: Membrane protein insertase YidC 2 (310 aa).

A signal peptide spans 1-23 (MKKTLKRILFSSLSLSMLLLLTG). Cysteine 24 carries N-palmitoyl cysteine lipidation. Cysteine 24 is lipidated: S-diacylglycerol cysteine. Transmembrane regions (helical) follow at residues 33 to 53 (PYGVIWNTLGVPMANLITYFA), 58 to 78 (LGFGVAIIIVTVIVRVVILPL), 135 to 155 (FGGIGCLPLLIQMPFFSAIFF), 180 to 200 (LTVIIAILYFVQSWLSMQGVP), and 219 to 239 (VFMSISLPASVALYWFIGGIF). Positions 266–310 (NPPKAYKANNARKDVTNSTKATESNQAIITSKKTNRNAGKQKRRG) are disordered. Residues 281 to 297 (TNSTKATESNQAIITSK) show a composition bias toward polar residues. Residues 298 to 310 (KTNRNAGKQKRRG) are compositionally biased toward basic residues.

This sequence belongs to the OXA1/ALB3/YidC family. Type 2 subfamily.

It localises to the cell membrane. In terms of biological role, required for the insertion and/or proper folding and/or complex formation of integral membrane proteins into the membrane. Involved in integration of membrane proteins that insert both dependently and independently of the Sec translocase complex, as well as at least some lipoproteins. The chain is Membrane protein insertase YidC 2 from Streptococcus agalactiae serotype V (strain ATCC BAA-611 / 2603 V/R).